A 20-amino-acid chain; its full sequence is 39 kDa major outer membrane protein (20 aa).

The protein resides in the cell outer membrane. In Aggregatibacter actinomycetemcomitans (Actinobacillus actinomycetemcomitans), this protein is 39 kDa major outer membrane protein.